The chain runs to 100 residues: NADH-quinone oxidoreductase subunit K (100 aa).

Transmembrane regions (helical) follow at residues 4 to 24 (MQHG…GLLI), 28 to 48 (LIFM…AWVV), and 60 to 80 (IFYL…LALL).

The protein belongs to the complex I subunit 4L family. NDH-1 is composed of 13 different subunits. Subunits NuoA, H, J, K, L, M, N constitute the membrane sector of the complex.

The protein resides in the cell membrane. The enzyme catalyses a quinone + NADH + 5 H(+)(in) = a quinol + NAD(+) + 4 H(+)(out). NDH-1 shuttles electrons from NADH, via FMN and iron-sulfur (Fe-S) centers, to quinones in the respiratory chain. The immediate electron acceptor for the enzyme in this species is believed to be ubiquinone. Couples the redox reaction to proton translocation (for every two electrons transferred, four hydrogen ions are translocated across the cytoplasmic membrane), and thus conserves the redox energy in a proton gradient. This is NADH-quinone oxidoreductase subunit K from Hamiltonella defensa subsp. Acyrthosiphon pisum (strain 5AT).